Consider the following 338-residue polypeptide: Glyceraldehyde-3-phosphate dehydrogenase (338 aa).

Residues 13–14 (RI), aspartate 35, and arginine 80 contribute to the NAD(+) site. Residues 151-153 (SCT), threonine 182, 211-212 (TG), and arginine 234 each bind D-glyceraldehyde 3-phosphate. Cysteine 152 serves as the catalytic Nucleophile. Asparagine 317 lines the NAD(+) pocket.

Belongs to the glyceraldehyde-3-phosphate dehydrogenase family. In terms of assembly, homotetramer.

It is found in the cytoplasm. It carries out the reaction D-glyceraldehyde 3-phosphate + phosphate + NAD(+) = (2R)-3-phospho-glyceroyl phosphate + NADH + H(+). The protein operates within carbohydrate degradation; glycolysis; pyruvate from D-glyceraldehyde 3-phosphate: step 1/5. In Aspergillus oryzae (strain ATCC 42149 / RIB 40) (Yellow koji mold), this protein is Glyceraldehyde-3-phosphate dehydrogenase (gpdA).